Reading from the N-terminus, the 217-residue chain is Proteasome subunit beta (217 aa).

The propeptide at M1–G14 is removed in mature form; by autocatalysis. Catalysis depends on T15, which acts as the Nucleophile.

Belongs to the peptidase T1B family. The 20S proteasome core is composed of 14 alpha and 14 beta subunits that assemble into four stacked heptameric rings, resulting in a barrel-shaped structure. The two inner rings, each composed of seven catalytic beta subunits, are sandwiched by two outer rings, each composed of seven alpha subunits. The catalytic chamber with the active sites is on the inside of the barrel. Has a gated structure, the ends of the cylinder being occluded by the N-termini of the alpha-subunits. Is capped at one or both ends by the proteasome regulatory ATPase, PAN.

The protein resides in the cytoplasm. The catalysed reaction is Cleavage of peptide bonds with very broad specificity.. Its activity is regulated as follows. The formation of the proteasomal ATPase PAN-20S proteasome complex, via the docking of the C-termini of PAN into the intersubunit pockets in the alpha-rings, triggers opening of the gate for substrate entry. Interconversion between the open-gate and close-gate conformations leads to a dynamic regulation of the 20S proteasome proteolysis activity. Component of the proteasome core, a large protease complex with broad specificity involved in protein degradation. The chain is Proteasome subunit beta from Methanococcus aeolicus (strain ATCC BAA-1280 / DSM 17508 / OCM 812 / Nankai-3).